Here is a 1558-residue protein sequence, read N- to C-terminus: Arginine-glutamic acid dipeptide repeats protein (1558 aa).

Residues 1 to 36 (MTADKDKDKDKEKDRDRDRDRERDKRDKARESENAR) are compositionally biased toward basic and acidic residues. The disordered stretch occupies residues 1–90 (MTADKDKDKD…KKKSRYERTD (90 aa)). 2 positions are modified to phosphoserine: S53 and S56. A compositionally biased stretch (basic residues) spans 74–85 (KSRKKPPKKKSR). A BAH domain is found at 103-283 (VVYRPGDCVY…PETRRLNSTQ (181 aa)). Phosphothreonine is present on T120. Phosphoserine occurs at positions 142 and 304. One can recognise an ELM2 domain in the interval 284-387 (GEIRVGPSHQ…KALQRLVKKP (104 aa)). An SANT domain is found at 391-443 (LIEKCWTEDEVKRFVKGLRQYGKNFFRIRKELLPSKETGELITFYYYWKKTPE). The tract at residues 464–495 (TRTASTPVNTPSRPPSSEFLDLSSASEDDFDS) is disordered. A compositionally biased stretch (polar residues) spans 465–474 (RTASTPVNTP). Residues 479-488 (SSEFLDLSSA) are compositionally biased toward low complexity. A GATA-type zinc finger spans residues 507 to 532 (CRHCFTTTSKDWHHGGRENILLCTDC). The tract at residues 542 to 1125 (LPPIEKPVDP…PSHASQSARF (584 aa)) is disordered. K560 is covalently cross-linked (Glycyl lysine isopeptide (Lys-Gly) (interchain with G-Cter in SUMO2)). T593 is subject to Phosphothreonine. 3 positions are modified to phosphoserine: S594, S600, and S613. A compositionally biased stretch (low complexity) spans 609–623 (SGRNSPSAASTSSND). Basic and acidic residues predominate over residues 624–640 (SKAETVKKSAKKVKEEA). Residue K637 forms a Glycyl lysine isopeptide (Lys-Gly) (interchain with G-Cter in SUMO2) linkage. 4 positions are modified to phosphoserine: S642, S656, S675, and S679. A compositionally biased stretch (basic and acidic residues) spans 652–673 (EKVASDTEDTDRITSKKTKTQE). Positions 688-708 (SDSRSVNDEGSSDPKDIDQDN) are enriched in basic and acidic residues. Positions 709-720 (RSTSPSIPSPQD) are enriched in polar residues. The span at 726–752 (DSSAQQQMLQAQPPALQAPSGAASAPS) shows a compositional bias: low complexity. Positions 778–792 (SPATSQPPNQTQSTV) are enriched in polar residues. Over residues 806 to 823 (LHPPRLPSPHPPLQPMTA) the composition is skewed to pro residues. Composition is skewed to low complexity over residues 824 to 857 (PPSQSSAQPHPQPSLHSQGPPGPHSLQTGPLLQH), 865 to 874 (GLPSQPSQGQ), and 891 to 901 (QLPASQSALQP). Residues 902–932 (QQPPREQPLPPAPLAMPHIKPPPTTPIPQLP) are compositionally biased toward pro residues. A compositionally biased stretch (low complexity) spans 962–972 (KPLSSLSTHHP). A compositionally biased stretch (polar residues) spans 1012–1023 (HPTTGLHQVPSQ). Pro residues predominate over residues 1027–1053 (PQHPFVPGGPPPITPPSCPPTSTPPAG). Positions 1054 to 1077 (PSSSSQPPCSAAVSSGGSVPGAPS) are enriched in low complexity. A phosphoserine mark is found at S1098, S1105, and S1107. The span at 1098 to 1109 (SPPPPPRSPSPE) shows a compositional bias: pro residues. T1111 bears the Phosphothreonine mark. The stretch at 1148-1203 (GSKLAKKREEAIEKAKREAEQKAREEREREKEKEKEREREREREREAERAAKASSS) forms a coiled coil. K1150 is modified (N6-acetyllysine). A compositionally biased stretch (basic and acidic residues) spans 1154–1198 (KREEAIEKAKREAEQKAREEREREKEKEKEREREREREREAERAA). A disordered region spans residues 1154-1238 (KREEAIEKAK…TTIAAVPPYI (85 aa)). Y1251 carries the post-translational modification Phosphotyrosine. S1258 carries the phosphoserine modification.

As to quaternary structure, interacts with HDAC1 and ATN1. Interaction with ATN1 is improved when the poly-Gln region of ATN1 is extended. Interacts with FAT1.

The protein localises to the nucleus. The protein resides in the PML body. Functionally, plays a role as a transcriptional repressor during development. May play a role in the control of cell survival. This chain is Arginine-glutamic acid dipeptide repeats protein (Rere), found in Mus musculus (Mouse).